Consider the following 194-residue polypeptide: dTTP/UTP pyrophosphatase (194 aa).

The active-site Proton acceptor is D76.

It belongs to the Maf family. YhdE subfamily. A divalent metal cation is required as a cofactor.

Its subcellular location is the cytoplasm. The catalysed reaction is dTTP + H2O = dTMP + diphosphate + H(+). It catalyses the reaction UTP + H2O = UMP + diphosphate + H(+). Its function is as follows. Nucleoside triphosphate pyrophosphatase that hydrolyzes dTTP and UTP. May have a dual role in cell division arrest and in preventing the incorporation of modified nucleotides into cellular nucleic acids. The polypeptide is dTTP/UTP pyrophosphatase (Shewanella sp. (strain MR-7)).